The following is a 376-amino-acid chain: MGAACPRRPIGARILPMVIYCFDPERGRRWTERLTGIRPQFACVLGFTETALIPGISAAGLTPEARRFTALGDGEVLLAGRSARLPSAPEGYPSPVVISRAVVELLGLPVRVFDAGLPETCKDAVHLGGSPARCLSTGRALAPDTVAHLFSQGLAWGERLADEGGYLAIGECVAGGTTTALAVLRALGHAADGLVSSSHPRCNHTQKGALVDLALQKADLPIDASALAILAALGDPAQPAIAGMAIAASHRVPVLLAGGTQMLAVAAVAERLAAEAGLGWRPEQIAVGTTRWVAADPTADAALLAARIGVVPLLAAALDFSHSRHPALQAYERGYVKEGVGAGGLAIAAELAGIDSERLLAAIDDWLDRWNLPTPV.

It belongs to the UPF0284 family.

The protein is UPF0284 protein glr4139 of Gloeobacter violaceus (strain ATCC 29082 / PCC 7421).